A 525-amino-acid polypeptide reads, in one-letter code: G-protein regulator 2 (525 aa).

The GoLoco domain occupies 424–445; sequence PVDMMDLIFSMSSRMDDQRTEL. The tract at residues 489-525 is disordered; sequence TMNRILKRSKKSKSSLDSTNSIQGDDTRSDDVTMTSK.

As to quaternary structure, interacts with gpr-1; gpr-1 forms a complex with lin-5 and GDP-bound goa-1.

The protein localises to the cytoplasm. Its subcellular location is the cell cortex. It is found in the cytoskeleton. The protein resides in the spindle. In terms of biological role, in the 1-cell embryo, probably together with gpr-1, controls nuclear rotation and spindle elongation during mitosis. Complex of gpr-1 and gpr-2, in association with lin-5, activates G-protein signaling to affect mitotic spindle force. Polarity determinants (par genes) may regulate lin-5/gpr-1/gpr-2/goa-1 locally to create the asymmetric forces that drive spindle movement. The polypeptide is G-protein regulator 2 (gpr-2) (Caenorhabditis elegans).